Here is a 124-residue protein sequence, read N- to C-terminus: Large ribosomal subunit protein bL12 (124 aa).

Belongs to the bacterial ribosomal protein bL12 family. In terms of assembly, homodimer. Part of the ribosomal stalk of the 50S ribosomal subunit. Forms a multimeric L10(L12)X complex, where L10 forms an elongated spine to which 2 to 4 L12 dimers bind in a sequential fashion. Binds GTP-bound translation factors.

Its function is as follows. Forms part of the ribosomal stalk which helps the ribosome interact with GTP-bound translation factors. Is thus essential for accurate translation. This chain is Large ribosomal subunit protein bL12, found in Phytoplasma australiense.